A 99-amino-acid polypeptide reads, in one-letter code: MALTKADIAEHLFEKLGINKKDAKDLVEAFFEEIRSALEKGEQIKLSGFGNFDLRDKKERPGRNPKTGEDIPISARRVVTFRPGQKLKTRVEVGTSKAK.

Belongs to the bacterial histone-like protein family. Heterodimer of an alpha and a beta chain.

Functionally, this protein is one of the two subunits of integration host factor, a specific DNA-binding protein that functions in genetic recombination as well as in transcriptional and translational control. In Pseudoalteromonas translucida (strain TAC 125), this protein is Integration host factor subunit alpha.